A 546-amino-acid polypeptide reads, in one-letter code: Glutathione synthetase, chloroplastic (546 aa).

The N-terminal 63 residues, 1 to 63 (MGSGCSSPSI…SPLKCAKVPE (63 aa)), are a transit peptide targeting the chloroplast. Position 200 (Arg-200) interacts with substrate. Glu-216 lines the ATP pocket. 2 residues coordinate Mg(2+): Glu-216 and Asn-218. Substrate is bound by residues 220-223 (ISSS), 288-290 (ERN), Gln-294, and 342-345 (RAGY). Residues Lys-381, 435-444 (KPQREGGGNN), Tyr-446, 471-474 (MQRI), and Glu-497 contribute to the ATP site. Glu-439 is a Mg(2+) binding site. Arg-522 is a substrate binding site. Lys-524 and Glu-530 together coordinate ATP. Residue 533–534 (VA) coordinates substrate.

The protein belongs to the eukaryotic GSH synthase family. As to quaternary structure, homodimer. Mg(2+) serves as cofactor.

It is found in the plastid. Its subcellular location is the chloroplast. It carries out the reaction gamma-L-glutamyl-L-cysteine + glycine + ATP = glutathione + ADP + phosphate + H(+). It functions in the pathway sulfur metabolism; glutathione biosynthesis; glutathione from L-cysteine and L-glutamate: step 2/2. This Solanum lycopersicum (Tomato) protein is Glutathione synthetase, chloroplastic (GSH2).